The primary structure comprises 505 residues: Nostrin (505 aa).

The F-BAR domain occupies M1–D260. 3 coiled-coil regions span residues A101–S128, I160–L222, and K295–S332. S114 bears the Phosphoserine mark. An REM-1 domain is found at A292 to E372. Positions L437–L496 constitute an SH3 domain. S478 is subject to Phosphoserine.

Homotrimer. Interacts with DAB2. Interacts with NOS3, DNM2, WASL and CAV1. Interacts (via SH3 domain) with DNM2; this interaction allows the recruitment of NOS3 to dynamin-positive structures. Present in pulmonary arterial endothelial cells (at protein level).

It localises to the cell membrane. The protein localises to the cytoplasmic vesicle. It is found in the cytoplasm. Its subcellular location is the cytoskeleton. Its function is as follows. Multivalent adapter protein which may decrease NOS3 activity by inducing its translocation away from the plasma membrane. The chain is Nostrin from Bos taurus (Bovine).